Here is a 473-residue protein sequence, read N- to C-terminus: Protein translocase subunit SecD (473 aa).

6 helical membrane passes run 5–25, 316–336, 337–357, 364–384, 409–429, and 436–456; these read VLVK…LLYP, ASLY…KSGG, IISN…MAAF, PGIA…VLIL, WSAI…LFQF, and GFAV…VFVT.

Belongs to the SecD/SecF family. SecD subfamily. Forms a complex with SecF. Part of the essential Sec protein translocation apparatus which comprises SecA, SecYEG and auxiliary proteins SecDF. Other proteins may also be involved.

Its subcellular location is the cell inner membrane. Its function is as follows. Part of the Sec protein translocase complex. Interacts with the SecYEG preprotein conducting channel. SecDF uses the proton motive force (PMF) to complete protein translocation after the ATP-dependent function of SecA. The sequence is that of Protein translocase subunit SecD from Elusimicrobium minutum (strain Pei191).